A 94-amino-acid chain; its full sequence is Large ribosomal subunit protein bL27 (94 aa).

Positions 1-9 (MLKLNLQFF) are excised as a propeptide.

This sequence belongs to the bacterial ribosomal protein bL27 family. Post-translationally, the N-terminus is cleaved by ribosomal processing cysteine protease Prp.

The protein is Large ribosomal subunit protein bL27 of Staphylococcus epidermidis (strain ATCC 35984 / DSM 28319 / BCRC 17069 / CCUG 31568 / BM 3577 / RP62A).